The primary structure comprises 104 residues: Large ribosomal subunit protein uL24 (104 aa).

The protein belongs to the universal ribosomal protein uL24 family. Part of the 50S ribosomal subunit.

Functionally, one of two assembly initiator proteins, it binds directly to the 5'-end of the 23S rRNA, where it nucleates assembly of the 50S subunit. Its function is as follows. One of the proteins that surrounds the polypeptide exit tunnel on the outside of the subunit. The polypeptide is Large ribosomal subunit protein uL24 (Azotobacter vinelandii (strain DJ / ATCC BAA-1303)).